Consider the following 212-residue polypeptide: Urease accessory protein UreG 2 (212 aa).

Residue 11 to 18 (GPVGSGKM) coordinates GTP.

It belongs to the SIMIBI class G3E GTPase family. UreG subfamily. In terms of assembly, homodimer. UreD, UreF and UreG form a complex that acts as a GTP-hydrolysis-dependent molecular chaperone, activating the urease apoprotein by helping to assemble the nickel containing metallocenter of UreC. The UreE protein probably delivers the nickel.

It is found in the cytoplasm. Its function is as follows. Facilitates the functional incorporation of the urease nickel metallocenter. This process requires GTP hydrolysis, probably effectuated by UreG. In terms of biological role, disrupting the ure2 operon has no effect on urease activity, or pathogen survival in BALB/c mice when inoculated by gavage, but confers slightly enhanced resistance to low pH killing in vitro. In Brucella suis biovar 1 (strain 1330), this protein is Urease accessory protein UreG 2.